The sequence spans 124 residues: Late histone H2B.2.2 (124 aa).

A disordered region spans residues 1–32 (MPAKQTSGKGAKKAGKAKGRPSGASKTRRRKR). The span at 10 to 19 (GAKKAGKAKG) shows a compositional bias: basic residues. O-linked (GlcNAc) serine glycosylation occurs at Ser-111. A Glycyl lysine isopeptide (Lys-Gly) (interchain with G-Cter in ubiquitin) cross-link involves residue Lys-119.

Belongs to the histone H2B family. In terms of assembly, the nucleosome is a histone octamer containing two molecules each of H2A, H2B, H3 and H4 assembled in one H3-H4 heterotetramer and two H2A-H2B heterodimers. The octamer wraps approximately 147 bp of DNA. Monoubiquitination of Lys-119 gives a specific tag for epigenetic transcriptional activation and is also prerequisite for histone H3 'Lys-4' and 'Lys-79' methylation. In terms of processing, glcNAcylation at Ser-111 promotes monoubiquitination of Lys-119. It fluctuates in response to extracellular glucose, and associates with transcribed genes.

It is found in the nucleus. The protein resides in the chromosome. In terms of biological role, core component of nucleosome. Nucleosomes wrap and compact DNA into chromatin, limiting DNA accessibility to the cellular machineries which require DNA as a template. Histones thereby play a central role in transcription regulation, DNA repair, DNA replication and chromosomal stability. DNA accessibility is regulated via a complex set of post-translational modifications of histones, also called histone code, and nucleosome remodeling. This chain is Late histone H2B.2.2, found in Psammechinus miliaris (Green sea urchin).